A 51-amino-acid polypeptide reads, in one-letter code: Sperm protamine P1 (51 aa).

The protein belongs to the protamine P1 family. In terms of tissue distribution, testis.

The protein localises to the nucleus. It is found in the chromosome. In terms of biological role, protamines substitute for histones in the chromatin of sperm during the haploid phase of spermatogenesis. They compact sperm DNA into a highly condensed, stable and inactive complex. This chain is Sperm protamine P1 (PRM1), found in Nasalis larvatus (Proboscis monkey).